A 620-amino-acid chain; its full sequence is 1-deoxy-D-xylulose-5-phosphate synthase (620 aa).

Thiamine diphosphate contacts are provided by residues H80 and 121–123 (GHS). D152 contributes to the Mg(2+) binding site. Thiamine diphosphate contacts are provided by residues 153–154 (GA), N181, Y288, and E370. Mg(2+) is bound at residue N181.

It belongs to the transketolase family. DXPS subfamily. As to quaternary structure, homodimer. Mg(2+) serves as cofactor. Requires thiamine diphosphate as cofactor.

It carries out the reaction D-glyceraldehyde 3-phosphate + pyruvate + H(+) = 1-deoxy-D-xylulose 5-phosphate + CO2. It participates in metabolic intermediate biosynthesis; 1-deoxy-D-xylulose 5-phosphate biosynthesis; 1-deoxy-D-xylulose 5-phosphate from D-glyceraldehyde 3-phosphate and pyruvate: step 1/1. Its function is as follows. Catalyzes the acyloin condensation reaction between C atoms 2 and 3 of pyruvate and glyceraldehyde 3-phosphate to yield 1-deoxy-D-xylulose-5-phosphate (DXP). The polypeptide is 1-deoxy-D-xylulose-5-phosphate synthase (Escherichia coli O157:H7).